A 330-amino-acid chain; its full sequence is Protoheme IX farnesyltransferase (330 aa).

Transmembrane regions (helical) follow at residues 33–53 (VMTLVVFTAFAGLIAAPVDAD), 54–74 (PFLAFMSILCLAVGAGAAGAL), 101–121 (VSNAYGFGVVASILSVLLMAL), 126–146 (LAAGLLAFSIFFYAVIYTMIL), 154–174 (IVIGGAAGAFPPMIGWVAATG), 180–200 (AVILFMIIFLWTPPHSWALAL), 227–247 (ILLYSIVLVIFAGAPVLTGLG), 250–270 (VYGATSLGGGALFLLLAWRIF), and 308–328 (VLFAALIVEHAFGAYVAIPGV).

It belongs to the UbiA prenyltransferase family. Protoheme IX farnesyltransferase subfamily. Interacts with CtaA.

Its subcellular location is the cell inner membrane. It carries out the reaction heme b + (2E,6E)-farnesyl diphosphate + H2O = Fe(II)-heme o + diphosphate. Its pathway is porphyrin-containing compound metabolism; heme O biosynthesis; heme O from protoheme: step 1/1. Converts heme B (protoheme IX) to heme O by substitution of the vinyl group on carbon 2 of heme B porphyrin ring with a hydroxyethyl farnesyl side group. In Maricaulis maris (strain MCS10) (Caulobacter maris), this protein is Protoheme IX farnesyltransferase.